The primary structure comprises 123 residues: Thioredoxin domain-containing protein 17 (123 aa).

The region spanning 41-123 is the Thioredoxin domain; that stretch reads SWCPDCVKAE…DLVRMMFTED (83 aa). Residues C43 and C46 each act as nucleophile in the active site. A disulfide bridge links C43 with C46.

It belongs to the thioredoxin family.

It is found in the cytoplasm. Disulfide reductase. May participate in various redox reactions through the reversible oxidation of its active center dithiol to a disulfide and catalyze dithiol-disulfide exchange reactions. Has peroxidase activity and may contribute to the elimination of cellular hydrogen peroxide. The polypeptide is Thioredoxin domain-containing protein 17 (txndc17) (Danio rerio (Zebrafish)).